We begin with the raw amino-acid sequence, 371 residues long: 4-hydroxyprotoasukamycin monooxygenase (371 aa).

This sequence belongs to the bacterial luciferase oxidoreductase family. The cofactor is FMN.

It carries out the reaction 4-hydroxyprotoasukamycin + NADH + O2 + H(+) = asukamycin + NAD(+) + H2O. It functions in the pathway antibiotic biosynthesis. Functionally, involved in the biosynthesis of the antibiotic asukamycin. Catalyzes the epoxidation of 4-hydroxyprotoasukamycin to the final product, asukamycin. Can also convert some 4-hydroxyprotoasukamycin derivatives to their asukamycin derivatives, but cannot use protoasukamycin as substrate. Can also use NADPH, but catalytic efficiency is 20-fold higher with NADH. The sequence is that of 4-hydroxyprotoasukamycin monooxygenase from Streptomyces nodosus subsp. asukaensis.